We begin with the raw amino-acid sequence, 495 residues long: Tripartite motif-containing protein 5 (495 aa).

Alanine 2 carries the N-acetylalanine modification. An RING-type zinc finger spans residues 15 to 60 (CPICLELLTEPLSLHCGHSFCQACITANHKKSMLYKEGERSCPVCR). Serine 87 carries the post-translational modification Phosphoserine. Residues 92–133 (QKVDHCARHGEKLLLFCQEDRKVICWLCERSQEHRGHHTFLM) form a B box-type zinc finger. Residues cysteine 97, histidine 100, cysteine 119, and histidine 125 each coordinate Zn(2+). Residues 137–225 (AQEYHVKLQT…LTKSETEMVQ (89 aa)) adopt a coiled-coil conformation. The segment at 187 to 200 (FEQLREILDWEESN) is required for interaction with GABARAP and for autophagy. In terms of domain architecture, B30.2/SPRY spans 283–495 (LKGILDMFRE…VPMTLCSPSS (213 aa)).

Belongs to the TRIM/RBCC family. In terms of assembly, can form homodimers and homotrimers. In addition to lower-order dimerization, also exhibits a higher-order multimerization and both low- and high-order multimerizations are essential for its restriction activity. Interacts with BTBD1 and BTBD2. Interacts with PSMC4, PSMC5, PSMD7 and HSPA8/HSC70. Interacts (via B30.2/SPRY domain) with HSPA1A/B. Interacts with PSMC2, MAP3K7/TAK1, TAB2 and TAB3. Interacts with SQSTM1. Interacts with TRIM6 and TRIM34. Interacts with ULK1 (phosphorylated form), GABARAP, GABARAPL1, GABARAPL2, MAP1LC3A, MAP1LC3C and BECN1. Degraded in a proteasome-independent fashion in the absence of viral infection but in a proteasome-dependent fashion following exposure to restriction sensitive virus. In terms of processing, autoubiquitinated in a RING finger- and UBE2D2-dependent manner. Monoubiquitinated by TRIM21. Deubiquitinated by Yersinia YopJ. Ubiquitination may not lead to proteasomal degradation.

It is found in the cytoplasm. The protein localises to the nucleus. The enzyme catalyses S-ubiquitinyl-[E2 ubiquitin-conjugating enzyme]-L-cysteine + [acceptor protein]-L-lysine = [E2 ubiquitin-conjugating enzyme]-L-cysteine + N(6)-ubiquitinyl-[acceptor protein]-L-lysine.. Its pathway is protein modification; protein ubiquitination. In terms of biological role, capsid-specific restriction factor that prevents infection from non-host-adapted retroviruses. Blocks viral replication early in the life cycle, after viral entry but before reverse transcription. In addition to acting as a capsid-specific restriction factor, also acts as a pattern recognition receptor that activates innate immune signaling in response to the retroviral capsid lattice. Binding to the viral capsid triggers its E3 ubiquitin ligase activity, and in concert with the heterodimeric ubiquitin conjugating enzyme complex UBE2V1-UBE2N (also known as UBC13-UEV1A complex) generates 'Lys-63'-linked polyubiquitin chains, which in turn are catalysts in the autophosphorylation of the MAP3K7/TAK1 complex (includes TAK1, TAB2, and TAB3). Activation of the MAP3K7/TAK1 complex by autophosphorylation results in the induction and expression of NF-kappa-B and MAPK-responsive inflammatory genes, thereby leading to an innate immune response in the infected cell. Plays a role in regulating autophagy through activation of autophagy regulator BECN1 by causing its dissociation from its inhibitors BCL2 and TAB2. The chain is Tripartite motif-containing protein 5 (TRIM5) from Pygathrix nemaeus (Red-shanked douc langur).